The chain runs to 354 residues: D-alanine--D-alanine ligase (354 aa).

The region spanning 133–338 (KHLFAQAGLP…YSDLIEQLVE (206 aa)) is the ATP-grasp domain. Residue 166–221 (EKELGYPCFVKPANLGSSVGISKCRNREELEKAFELAFEYDRKIVVEEGIAGREIE) coordinates ATP. Mg(2+)-binding residues include Asp292, Glu305, and Asn307.

The protein belongs to the D-alanine--D-alanine ligase family. Mg(2+) serves as cofactor. Mn(2+) is required as a cofactor.

Its subcellular location is the cytoplasm. The catalysed reaction is 2 D-alanine + ATP = D-alanyl-D-alanine + ADP + phosphate + H(+). The protein operates within cell wall biogenesis; peptidoglycan biosynthesis. In terms of biological role, cell wall formation. This chain is D-alanine--D-alanine ligase, found in Bacillus velezensis (strain DSM 23117 / BGSC 10A6 / LMG 26770 / FZB42) (Bacillus amyloliquefaciens subsp. plantarum).